A 409-amino-acid polypeptide reads, in one-letter code: NADH-quinone oxidoreductase subunit D 1 (409 aa).

It belongs to the complex I 49 kDa subunit family. In terms of assembly, NDH-1 is composed of 14 different subunits. Subunits NuoB, C, D, E, F, and G constitute the peripheral sector of the complex.

Its subcellular location is the cell inner membrane. It catalyses the reaction a quinone + NADH + 5 H(+)(in) = a quinol + NAD(+) + 4 H(+)(out). In terms of biological role, NDH-1 shuttles electrons from NADH, via FMN and iron-sulfur (Fe-S) centers, to quinones in the respiratory chain. The immediate electron acceptor for the enzyme in this species is believed to be ubiquinone. Couples the redox reaction to proton translocation (for every two electrons transferred, four hydrogen ions are translocated across the cytoplasmic membrane), and thus conserves the redox energy in a proton gradient. In Solibacter usitatus (strain Ellin6076), this protein is NADH-quinone oxidoreductase subunit D 1.